Consider the following 237-residue polypeptide: Cytidylate kinase (237 aa).

Residue 15 to 23 (GPSGSGKGT) coordinates ATP.

Belongs to the cytidylate kinase family. Type 1 subfamily.

It is found in the cytoplasm. The enzyme catalyses CMP + ATP = CDP + ADP. The catalysed reaction is dCMP + ATP = dCDP + ADP. The chain is Cytidylate kinase from Coxiella burnetii (strain RSA 493 / Nine Mile phase I).